The chain runs to 510 residues: Histidine ammonia-lyase (510 aa).

The 5-imidazolinone (Ala-Gly) cross-link spans alanine 143–glycine 145. 2,3-didehydroalanine (Ser) is present on serine 144.

It belongs to the PAL/histidase family. Contains an active site 4-methylidene-imidazol-5-one (MIO), which is formed autocatalytically by cyclization and dehydration of residues Ala-Ser-Gly.

The protein localises to the cytoplasm. It carries out the reaction L-histidine = trans-urocanate + NH4(+). Its pathway is amino-acid degradation; L-histidine degradation into L-glutamate; N-formimidoyl-L-glutamate from L-histidine: step 1/3. This chain is Histidine ammonia-lyase, found in Aliivibrio fischeri (strain ATCC 700601 / ES114) (Vibrio fischeri).